Here is a 220-residue protein sequence, read N- to C-terminus: Uracil-DNA glycosylase (220 aa).

The active-site Proton acceptor is Asp-60.

It belongs to the uracil-DNA glycosylase (UDG) superfamily. UNG family.

The protein localises to the cytoplasm. The catalysed reaction is Hydrolyzes single-stranded DNA or mismatched double-stranded DNA and polynucleotides, releasing free uracil.. Its function is as follows. Excises uracil residues from the DNA which can arise as a result of misincorporation of dUMP residues by DNA polymerase or due to deamination of cytosine. The polypeptide is Uracil-DNA glycosylase (Francisella tularensis subsp. holarctica (strain FTNF002-00 / FTA)).